Here is a 21-residue protein sequence, read N- to C-terminus: uncharacterized protein (21 aa).

This is an uncharacterized protein from Haemophilus influenzae (strain ATCC 51907 / DSM 11121 / KW20 / Rd).